A 218-amino-acid polypeptide reads, in one-letter code: 3,4-dihydroxy-2-butanone 4-phosphate synthase (218 aa).

Residues R38–E39, D43, R151–T155, and E175 contribute to the D-ribulose 5-phosphate site. E39 contributes to the Mg(2+) binding site. H154 provides a ligand contact to Mg(2+).

Belongs to the DHBP synthase family. As to quaternary structure, homodimer. It depends on Mg(2+) as a cofactor. The cofactor is Mn(2+).

The catalysed reaction is D-ribulose 5-phosphate = (2S)-2-hydroxy-3-oxobutyl phosphate + formate + H(+). Its pathway is cofactor biosynthesis; riboflavin biosynthesis; 2-hydroxy-3-oxobutyl phosphate from D-ribulose 5-phosphate: step 1/1. In terms of biological role, catalyzes the conversion of D-ribulose 5-phosphate to formate and 3,4-dihydroxy-2-butanone 4-phosphate. This Vibrio atlanticus (strain LGP32) (Vibrio splendidus (strain Mel32)) protein is 3,4-dihydroxy-2-butanone 4-phosphate synthase.